A 579-amino-acid chain; its full sequence is YTH domain-containing family protein 2 (579 aa).

Residues 1–45 (MSASSLLEQRPKGQGNKVQNGSVHQKDGLNDDDFEPYLSPQARPN) form a disordered region. S2 is subject to N-acetylserine. Phosphoserine is present on residues S2, S4, S5, S22, S39, and S196. The interval 2-384 (SASSLLEQRP…QAGSGSTPSE (383 aa)) is localization to mRNA processing bodies (P-bodies). The tract at residues 247–387 (AKQQPKLKTK…SGSTPSEPHP (141 aa)) is disordered. Residues 291–316 (ALVQNIGQPTQGSPQPVGQQANNSPP) are compositionally biased toward polar residues. A compositionally biased stretch (low complexity) spans 337–349 (AQLSVQQQAAQPT). Residue S359 is modified to Phosphoserine. Gly residues predominate over residues 359-371 (SGFGHNGVDGNGV). Over residues 372–383 (GQSQAGSGSTPS) the composition is skewed to polar residues. An interaction with m6A-containing mRNAs region spans residues 385–579 (PHPVLEKLRS…VKKERQGRGK (195 aa)). A Phosphoserine modification is found at S394. The YTH domain maps to 410-544 (GRVFIIKSYS…EKAKQVLKII (135 aa)). RNA is bound by residues 416–418 (KSY), D422, 432–433 (WC), N462, W486, and W491.

The protein belongs to the YTHDF family. YTHDF2 subfamily. Interacts with CNOT1; interaction is direct and promotes recruitment of the CCR4-NOT complex. Interacts with YTHDF3. Interacts with RIDA/HRSP12; interaction leads to recruitment of the ribonuclease P/MRP complex. In terms of processing, ubiquitinated by the SCF(SKP2) complex, leading to its degradation. As to expression, highly expressed in induced pluripotent stem cells (iPSCs) and down-regulated during neural differentiation.

The protein localises to the cytoplasm. It is found in the cytosol. The protein resides in the P-body. Its subcellular location is the stress granule. It localises to the nucleus. Its function is as follows. Specifically recognizes and binds N6-methyladenosine (m6A)-containing RNAs, and regulates their stability. M6A is a modification present at internal sites of mRNAs and some non-coding RNAs and plays a role in mRNA stability and processing. Acts as a regulator of mRNA stability by promoting degradation of m6A-containing mRNAs via interaction with the CCR4-NOT and ribonuclease P/MRP complexes, depending on the context. The YTHDF paralogs (YTHDF1, YTHDF2 and YTHDF3) share m6A-containing mRNAs targets and act redundantly to mediate mRNA degradation and cellular differentiation. M6A-containing mRNAs containing a binding site for RIDA/HRSP12 (5'-GGUUC-3') are preferentially degraded by endoribonucleolytic cleavage: cooperative binding of RIDA/HRSP12 and YTHDF2 to transcripts leads to recruitment of the ribonuclease P/MRP complex. Other m6A-containing mRNAs undergo deadenylation via direct interaction between YTHDF2 and CNOT1, leading to recruitment of the CCR4-NOT and subsequent deadenylation of m6A-containing mRNAs. Required maternally to regulate oocyte maturation: probably acts by binding to m6A-containing mRNAs, thereby regulating maternal transcript dosage during oocyte maturation, which is essential for the competence of oocytes to sustain early zygotic development. Also required during spermatogenesis: regulates spermagonial adhesion by promoting degradation of m6A-containing transcripts coding for matrix metallopeptidases. Also involved in hematopoietic stem cells specification by binding to m6A-containing mRNAs, leading to promote their degradation. Also acts as a regulator of neural development by promoting m6A-dependent degradation of neural development-related mRNA targets. Inhibits neural specification of induced pluripotent stem cells by binding to methylated neural-specific mRNAs and promoting their degradation, thereby restraining neural differentiation. Regulates circadian regulation of hepatic lipid metabolism: acts by promoting m6A-dependent degradation of PPARA transcripts. Regulates the innate immune response to infection by inhibiting the type I interferon response: acts by binding to m6A-containing IFNB transcripts and promoting their degradation. May also act as a promoter of cap-independent mRNA translation following heat shock stress: upon stress, relocalizes to the nucleus and specifically binds mRNAs with some m6A methylation mark at their 5'-UTR, protecting demethylation of mRNAs by FTO, thereby promoting cap-independent mRNA translation. Regulates mitotic entry by promoting the phase-specific m6A-dependent degradation of WEE1 transcripts. Promotes formation of phase-separated membraneless compartments, such as P-bodies or stress granules, by undergoing liquid-liquid phase separation upon binding to mRNAs containing multiple m6A-modified residues: polymethylated mRNAs act as a multivalent scaffold for the binding of YTHDF proteins, juxtaposing their disordered regions and thereby leading to phase separation. The resulting mRNA-YTHDF complexes then partition into different endogenous phase-separated membraneless compartments, such as P-bodies, stress granules or neuronal RNA granules. May also recognize and bind RNAs modified by C5-methylcytosine (m5C) and act as a regulator of rRNA processing. Functionally, (Microbial infection) Promotes viral gene expression and replication of polyomavirus SV40: acts by binding to N6-methyladenosine (m6A)-containing viral RNAs. (Microbial infection) Promotes viral gene expression and virion production of kaposis sarcoma-associated herpesvirus (KSHV) at some stage of the KSHV life cycle (in iSLK.219 and iSLK.BAC16 cells). Acts by binding to N6-methyladenosine (m6A)-containing viral RNAs. In Homo sapiens (Human), this protein is YTH domain-containing family protein 2.